The sequence spans 239 residues: Ribosomal RNA large subunit methyltransferase E (239 aa).

Residues 1–20 (MTKAPIAGNRTGRKLGQRVK) form a disordered region. Positions 11 to 20 (TGRKLGQRVK) are enriched in basic residues. S-adenosyl-L-methionine contacts are provided by Gly-81, Trp-83, Asp-104, Asp-120, and Asp-144. Lys-184 functions as the Proton acceptor in the catalytic mechanism.

It belongs to the class I-like SAM-binding methyltransferase superfamily. RNA methyltransferase RlmE family.

The protein localises to the cytoplasm. It carries out the reaction uridine(2552) in 23S rRNA + S-adenosyl-L-methionine = 2'-O-methyluridine(2552) in 23S rRNA + S-adenosyl-L-homocysteine + H(+). Specifically methylates the uridine in position 2552 of 23S rRNA at the 2'-O position of the ribose in the fully assembled 50S ribosomal subunit. This is Ribosomal RNA large subunit methyltransferase E from Rhizobium leguminosarum bv. trifolii (strain WSM2304).